We begin with the raw amino-acid sequence, 2027 residues long: Dedicator of cytokinesis protein 3 (2027 aa).

In terms of domain architecture, SH3 spans 6 to 67; it reads EEEKYGVVIC…PANYIHLKKA (62 aa). Residues 421–598 enclose the C2 DOCK-type domain; sequence RNDLYLTLEK…ESFFISTQLS (178 aa). Positions 1225–1632 constitute a DOCKER domain; it reads KSEINKEEMY…LYHEFPGLDK (408 aa). Serine 1655 carries the phosphoserine modification. Disordered regions lie at residues 1672–1695, 1731–1768, 1846–1925, and 1971–2027; these read GTGR…MMMM, SSSQ…SLPD, DTPP…DEGL, and PPKP…RGEQ. 2 stretches are compositionally biased toward low complexity: residues 1676-1695 and 1731-1751; these read HSSS…MMMM and SSSQ…APSQ. Residues 1752–1763 are compositionally biased toward polar residues; it reads MITSAPSSTRGS. The span at 1877-1899 shows a compositional bias: low complexity; sequence GSNSTLSGSASSGVSSLSESNFG. The SH3-binding signature appears at 1967-1973; the sequence is PPALPPK. 2 stretches are compositionally biased toward basic and acidic residues: residues 1981–1998 and 2011–2027; these read ALEH…ERPR and VKEE…RGEQ.

This sequence belongs to the DOCK family. As to quaternary structure, interacts with presenilin proteins PSEN1 and PSEN2. Interacts with CRK. In terms of tissue distribution, expressed in brain, spinal cord, pituitary gland, testis. Not expressed in heart, liver, kidney, spleen and lung. In brain, it is highly expressed in the cerebral cortex and hippocampus, while it is absent in other tissues, except in spinal cord. In the cerebral cortex, it is found within the intermediate (III and IV) and deep (V and VI) layers, whereas it is weakly expressed in superficial layer I. It is also abundant in the piriform cortex. Within the hippocampus, it is expressed in the pyramidal neurons of the CA1, CA2, and CA3 regions and the dentate gyrus.

Its subcellular location is the cytoplasm. Its function is as follows. Potential guanine nucleotide exchange factor (GEF). GEF proteins activate some small GTPases by exchanging bound GDP for free GTP. Its interaction with presenilin proteins as well as its ability to stimulate Tau/MAPT phosphorylation suggest that it may be involved in Alzheimer disease. Ectopic expression in nerve cells decreases the secretion of amyloid-beta APBA1 protein and lowers the rate of cell-substratum adhesion, suggesting that it may affect the function of some small GTPase involved in the regulation of actin cytoskeleton or cell adhesion receptors. This is Dedicator of cytokinesis protein 3 (Dock3) from Mus musculus (Mouse).